A 633-amino-acid chain; its full sequence is Cyclic GMP-AMP synthase-like receptor 1 (633 aa).

Disordered stretches follow at residues 23-80 (KVHG…HPHT), 107-214 (FKGP…TDPF), and 250-276 (REDDKSDQEKRDSWKRREGSVDDRPSS). Positions 29–67 (KQHESAHPPRERHTERTATKRSDETKTASRPTASHEGKT) are enriched in basic and acidic residues. A compositionally biased stretch (polar residues) spans 68–80 (HTTNPRGQVHPHT). 3 stretches are compositionally biased toward basic and acidic residues: residues 125-143 (RKPETPKKPHSATKDDHRT), 176-194 (RKPDTPKKPHSATKDDHRT), and 250-274 (REDDKSDQEKRDSWKRREGSVDDRP). Mg(2+) contacts are provided by Glu-353, Asp-355, and Asp-455.

It belongs to the mab-21 family. It depends on Mg(2+) as a cofactor. The cofactor is Mn(2+).

The enzyme catalyses UTP + ATP = 2',3'-cUAMP + 2 diphosphate. In terms of biological role, nucleotidyltransferase that catalyzes the formation of cyclic UMP-AMP (2',3'-cUAMP) from ATP and UTP and plays a key role in innate immunity. Acts as a key sensor of double-stranded DNA (dsDNA), the presence of dsDNA in the cytoplasm being a danger signal that triggers the immune responses. Directly binds dsDNA, activating the nucleotidyltransferase activity, leading to synthesis of 2',3'-cUAMP, a second messenger that binds to and activates Sting, thereby triggering the immune response via activation of the NF-kappa-B transcription factor. This Crassostrea virginica (Eastern oyster) protein is Cyclic GMP-AMP synthase-like receptor 1.